We begin with the raw amino-acid sequence, 136 residues long: Small ribosomal subunit protein uS11c (136 aa).

This sequence belongs to the universal ribosomal protein uS11 family. Part of the 30S ribosomal subunit.

It is found in the plastid. It localises to the chloroplast. The sequence is that of Small ribosomal subunit protein uS11c from Helianthus annuus (Common sunflower).